The chain runs to 438 residues: UDP-N-acetylmuramoylalanine--D-glutamate ligase (438 aa).

ATP is bound at residue 105 to 111; the sequence is GSNGKTT.

Belongs to the MurCDEF family.

The protein resides in the cytoplasm. It carries out the reaction UDP-N-acetyl-alpha-D-muramoyl-L-alanine + D-glutamate + ATP = UDP-N-acetyl-alpha-D-muramoyl-L-alanyl-D-glutamate + ADP + phosphate + H(+). It participates in cell wall biogenesis; peptidoglycan biosynthesis. Cell wall formation. Catalyzes the addition of glutamate to the nucleotide precursor UDP-N-acetylmuramoyl-L-alanine (UMA). The polypeptide is UDP-N-acetylmuramoylalanine--D-glutamate ligase (Oenococcus oeni (strain ATCC BAA-331 / PSU-1)).